Here is a 216-residue protein sequence, read N- to C-terminus: Somatotropin (216 aa).

The signal sequence occupies residues 1 to 26 (MAAGPRTSVLLAFTLLCLPWPQEAGA). Position 45 (His-45) interacts with Zn(2+). The cysteines at positions 78 and 189 are disulfide-linked. Ser-131 bears the Phosphoserine mark. Residue Glu-198 coordinates Zn(2+). A disulfide bond links Cys-206 and Cys-214.

Belongs to the somatotropin/prolactin family.

The protein localises to the secreted. Functionally, plays an important role in growth control. Its major role in stimulating body growth is to stimulate the liver and other tissues to secrete IGF1. It stimulates both the differentiation and proliferation of myoblasts. It also stimulates amino acid uptake and protein synthesis in muscle and other tissues. The protein is Somatotropin (GH1) of Camelus dromedarius (Dromedary).